The sequence spans 110 residues: UPF0122 protein spr1167 (110 aa).

Belongs to the UPF0122 family.

Its function is as follows. Might take part in the signal recognition particle (SRP) pathway. This is inferred from the conservation of its genetic proximity to ftsY/ffh. May be a regulatory protein. This Streptococcus pneumoniae (strain ATCC BAA-255 / R6) protein is UPF0122 protein spr1167.